A 215-amino-acid chain; its full sequence is MVLLTMIARVADGLPLAASMQEDEQSGRDLQQYQSQAKQLFRKLNEQSPTRCTLGAGAMTFHYIIEQGVCYLVLCEAAFPKKLAFAYLEDLHSEFDEQHGKKVPTVSRPYSFIEFDTFIQKTKKLYIDSRARRNLGSINTELQDVQRIMVANIEEVLQRGEALSALDSKANNLSSLSKKYRQDAKYLNMRSTYAKLAAVAVFFIMLIVYVRFWWL.

Topologically, residues 1–194 (MVLLTMIARV…KYLNMRSTYA (194 aa)) are cytoplasmic. The 114-residue stretch at 6 to 119 (MIARVADGLP…YSFIEFDTFI (114 aa)) folds into the Longin domain. Lys38 bears the N6-acetyllysine mark. The 61-residue stretch at 134–194 (NLGSINTELQ…KYLNMRSTYA (61 aa)) folds into the v-SNARE coiled-coil homology domain. Residue Ser137 is modified to Phosphoserine. Thr140 carries the post-translational modification Phosphothreonine. Phosphoserine is present on residues Ser164, Ser168, Ser174, and Ser177. Residues 195-215 (KLAAVAVFFIMLIVYVRFWWL) traverse the membrane as a helical; Anchor for type IV membrane protein segment.

Belongs to the synaptobrevin family. In terms of assembly, interacts with STX17. Component of two distinct SNARE complexes consisting of STX5, GOSR2/BOS1, BET1 and SEC22B or STX18, USE1L, BNIP1/SEC20L and SEC22B. YKT6 can probably replace SEC22B as subunit of either complex. Interacts with the COPII Sec23/24 complex composed of SEC23A and SEC24A; recruits SEC22B into COPII-coated vesicles to allow its transport from the endoplasmic reticulum to the Golgi. Interacts with BET1.

Its subcellular location is the endoplasmic reticulum membrane. The protein resides in the endoplasmic reticulum-Golgi intermediate compartment membrane. It localises to the golgi apparatus. It is found in the cis-Golgi network membrane. The protein localises to the trans-Golgi network membrane. Its subcellular location is the melanosome. SNARE involved in targeting and fusion of ER-derived transport vesicles with the Golgi complex as well as Golgi-derived retrograde transport vesicles with the ER. This is Vesicle-trafficking protein SEC22b (Sec22b) from Cricetulus griseus (Chinese hamster).